The following is a 217-amino-acid chain: Dihydroflavonol 4-reductase (217 aa).

The NADP(+) site is built by K27 and Y146.

This sequence belongs to the NAD(P)-dependent epimerase/dehydratase family. Dihydroflavonol-4-reductase subfamily.

It carries out the reaction a (2R,3S,4S)-leucoanthocyanidin + NADP(+) = a (2R,3R)-dihydroflavonol + NADPH + H(+). It catalyses the reaction (2S)-flavan-4-ol + NADP(+) = (2S)-flavanone + NADPH + H(+). It functions in the pathway pigment biosynthesis; anthocyanin biosynthesis. Bifunctional enzyme involved in flavonoid metabolism. The sequence is that of Dihydroflavonol 4-reductase (DFR1) from Medicago sativa (Alfalfa).